Here is a 349-residue protein sequence, read N- to C-terminus: Transcription elongation factor A protein 3 (349 aa).

A TFIIS N-terminal domain is found at Glu-5–Pro-82. Residues Asp-80–Thr-170 are disordered. Over residues Lys-101 to Pro-110 the composition is skewed to basic and acidic residues. Ser-115 bears the Phosphoserine mark. The span at Arg-121–Asp-133 shows a compositional bias: basic and acidic residues. Low complexity-rich tracts occupy residues Ser-134–Arg-144 and Pro-160–Thr-170. Residue Ser-141 is modified to Phosphoserine. Positions Val-188 to Thr-304 constitute a TFIIS central domain. The TFIIS-type zinc finger occupies Asp-307–Lys-347. The Zn(2+) site is built by Cys-311, Cys-314, Cys-339, and Cys-342.

Belongs to the TFS-II family.

The protein localises to the nucleus. Its function is as follows. Necessary for efficient RNA polymerase II transcription elongation past template-encoded arresting sites. The arresting sites in DNA have the property of trapping a certain fraction of elongating RNA polymerases that pass through, resulting in locked ternary complexes. Cleavage of the nascent transcript by S-II allows the resumption of elongation from the new 3'-terminus. The chain is Transcription elongation factor A protein 3 (TCEA3) from Bos taurus (Bovine).